The following is a 125-amino-acid chain: Late histone H2A.1 (125 aa).

Residues M1–S18 show a composition bias toward basic residues. Residues M1–A21 form a disordered region. S2 carries the post-translational modification N-acetylserine. S2 is subject to Phosphoserine. Q104 is modified (N5-methylglutamine). K119 participates in a covalent cross-link: Glycyl lysine isopeptide (Lys-Gly) (interchain with G-Cter in ubiquitin).

The protein belongs to the histone H2A family. In terms of assembly, the nucleosome is a histone octamer containing two molecules each of H2A, H2B, H3 and H4 assembled in one H3-H4 heterotetramer and two H2A-H2B heterodimers. The octamer wraps approximately 147 bp of DNA. In terms of processing, monoubiquitination of Lys-119 gives a specific tag for epigenetic transcriptional repression. Post-translationally, phosphorylation of Ser-2 directly represses transcription.

Its subcellular location is the nucleus. The protein resides in the chromosome. Core component of nucleosome. Nucleosomes wrap and compact DNA into chromatin, limiting DNA accessibility to the cellular machineries which require DNA as a template. Histones thereby play a central role in transcription regulation, DNA repair, DNA replication and chromosomal stability. DNA accessibility is regulated via a complex set of post-translational modifications of histones, also called histone code, and nucleosome remodeling. This chain is Late histone H2A.1, found in Psammechinus miliaris (Green sea urchin).